A 344-amino-acid chain; its full sequence is Holliday junction branch migration complex subunit RuvB (344 aa).

Residues Met-1–Tyr-185 are large ATPase domain (RuvB-L). ATP is bound by residues Leu-24, Arg-25, Gly-66, Lys-69, Thr-70, Thr-71, Glu-132–Tyr-134, Arg-175, Tyr-185, and Arg-222. Thr-70 contributes to the Mg(2+) binding site. Residues Thr-186 to Asp-256 form a small ATPAse domain (RuvB-S) region. The interval Glu-259–Glu-344 is head domain (RuvB-H). Residues Arg-314 and Arg-319 each coordinate DNA.

This sequence belongs to the RuvB family. In terms of assembly, homohexamer. Forms an RuvA(8)-RuvB(12)-Holliday junction (HJ) complex. HJ DNA is sandwiched between 2 RuvA tetramers; dsDNA enters through RuvA and exits via RuvB. An RuvB hexamer assembles on each DNA strand where it exits the tetramer. Each RuvB hexamer is contacted by two RuvA subunits (via domain III) on 2 adjacent RuvB subunits; this complex drives branch migration. In the full resolvosome a probable DNA-RuvA(4)-RuvB(12)-RuvC(2) complex forms which resolves the HJ.

The protein resides in the cytoplasm. It catalyses the reaction ATP + H2O = ADP + phosphate + H(+). Its function is as follows. The RuvA-RuvB-RuvC complex processes Holliday junction (HJ) DNA during genetic recombination and DNA repair, while the RuvA-RuvB complex plays an important role in the rescue of blocked DNA replication forks via replication fork reversal (RFR). RuvA specifically binds to HJ cruciform DNA, conferring on it an open structure. The RuvB hexamer acts as an ATP-dependent pump, pulling dsDNA into and through the RuvAB complex. RuvB forms 2 homohexamers on either side of HJ DNA bound by 1 or 2 RuvA tetramers; 4 subunits per hexamer contact DNA at a time. Coordinated motions by a converter formed by DNA-disengaged RuvB subunits stimulates ATP hydrolysis and nucleotide exchange. Immobilization of the converter enables RuvB to convert the ATP-contained energy into a lever motion, pulling 2 nucleotides of DNA out of the RuvA tetramer per ATP hydrolyzed, thus driving DNA branch migration. The RuvB motors rotate together with the DNA substrate, which together with the progressing nucleotide cycle form the mechanistic basis for DNA recombination by continuous HJ branch migration. Branch migration allows RuvC to scan DNA until it finds its consensus sequence, where it cleaves and resolves cruciform DNA. This Salinibacter ruber (strain DSM 13855 / M31) protein is Holliday junction branch migration complex subunit RuvB.